The following is a 55-amino-acid chain: DSPAWLKSMERIFQSEERECRWMFGGCTTDSDCCEHLGCRWEKPSWCAWDGTVRK.

Residues 1-19 (DSPAWLKSMERIFQSEERE) constitute a propeptide that is removed on maturation. Intrachain disulfides connect cysteine 20-cysteine 34, cysteine 27-cysteine 39, and cysteine 33-cysteine 47.

Belongs to the neurotoxin 10 (Hwtx-1) family. 06 (F4b) subfamily. In terms of tissue distribution, expressed by the venom gland.

The protein resides in the secreted. In terms of biological role, probable ion channel inhibitor. The protein is U2-theraphotoxin-Cg1a of Chilobrachys guangxiensis (Chinese earth tiger tarantula).